Reading from the N-terminus, the 223-residue chain is Putative NAD(P)H nitroreductase SAUSA300_2462 (223 aa).

Belongs to the nitroreductase family. The cofactor is FMN.

In Staphylococcus aureus (strain USA300), this protein is Putative NAD(P)H nitroreductase SAUSA300_2462.